The primary structure comprises 208 residues: Small ribosomal subunit protein uS4 (208 aa).

In terms of domain architecture, S4 RNA-binding spans 98–164; the sequence is SRLDNVVYRM…DRIKFALELA (67 aa).

Belongs to the universal ribosomal protein uS4 family. Part of the 30S ribosomal subunit. Contacts protein S5. The interaction surface between S4 and S5 is involved in control of translational fidelity.

Its function is as follows. One of the primary rRNA binding proteins, it binds directly to 16S rRNA where it nucleates assembly of the body of the 30S subunit. With S5 and S12 plays an important role in translational accuracy. This Nitrosococcus oceani (strain ATCC 19707 / BCRC 17464 / JCM 30415 / NCIMB 11848 / C-107) protein is Small ribosomal subunit protein uS4.